Consider the following 670-residue polypeptide: uncharacterized protein (670 aa).

10 helical membrane passes run 23–42, 47–69, 76–98, 118–140, 153–170, 381–403, 410–432, 437–454, 461–483, and 493–510; these read YALR…YYLN, YWAM…SKSL, LLGA…FFLL, VAYA…VNIT, VCEV…MMIL, QWDA…SAVA, SLLM…GLMV, LWQF…MQLL, FAAL…NPPV, and NLAK…FAIL.

The protein belongs to the aromatic acid exporter ArAE (TC 2.A.85) family.

It is found in the cell membrane. This is an uncharacterized protein from Escherichia coli (strain K12).